A 109-amino-acid chain; its full sequence is Spermidine export protein MdtI (109 aa).

Transmembrane regions (helical) follow at residues 6–26 (WVHA…NVFL), 36–56 (IFGL…SQAV), 64–84 (AYAL…WILF), and 88–108 (LNRK…MVKL).

This sequence belongs to the drug/metabolite transporter (DMT) superfamily. Small multidrug resistance (SMR) (TC 2.A.7.1) family. MdtI subfamily. As to quaternary structure, forms a complex with MdtJ.

The protein localises to the cell inner membrane. In terms of biological role, catalyzes the excretion of spermidine. This chain is Spermidine export protein MdtI, found in Escherichia coli O81 (strain ED1a).